The following is a 429-amino-acid chain: Oxysterol-binding protein-like protein OBPalpha (429 aa).

This sequence belongs to the OSBP family.

This Candida albicans (strain SC5314 / ATCC MYA-2876) (Yeast) protein is Oxysterol-binding protein-like protein OBPalpha (OBPALPHA).